The primary structure comprises 897 residues: Protein translocase subunit SecA (897 aa).

Residues Gln-87, 105–109 (GEGKT), and Asp-512 contribute to the ATP site. The segment at 846–897 (EEEQQKQARKKMVFNLVDEDETSEPSKSKKLAGRNEPCPCGSGKKYKKCCGK) is disordered. Residues Cys-883, Cys-885, Cys-894, and Cys-895 each contribute to the Zn(2+) site.

The protein belongs to the SecA family. In terms of assembly, monomer and homodimer. Part of the essential Sec protein translocation apparatus which comprises SecA, SecYEG and auxiliary proteins SecDF-YajC and YidC. The cofactor is Zn(2+).

The protein localises to the cell inner membrane. Its subcellular location is the cytoplasm. It carries out the reaction ATP + H2O + cellular proteinSide 1 = ADP + phosphate + cellular proteinSide 2.. Its function is as follows. Part of the Sec protein translocase complex. Interacts with the SecYEG preprotein conducting channel. Has a central role in coupling the hydrolysis of ATP to the transfer of proteins into and across the cell membrane, serving as an ATP-driven molecular motor driving the stepwise translocation of polypeptide chains across the membrane. The protein is Protein translocase subunit SecA of Geobacter sulfurreducens (strain ATCC 51573 / DSM 12127 / PCA).